A 714-amino-acid polypeptide reads, in one-letter code: Angiogenic factor with G patch and FHA domains 1 (714 aa).

Positions 1–18 are enriched in pro residues; sequence MASEAPSPPRSPPPPTSP. Disordered regions lie at residues 1–22, 259–307, and 322–384; these read MASE…EPEL, QPYP…HTSC, and IGIH…SYDE. N-acetylalanine is present on A2. Phosphoserine occurs at positions 7 and 11. Residues 18–88 are a coiled coil; it reads PEPELAQLRR…QRGRNEDNKK (71 aa). Positions 279–298 are enriched in basic and acidic residues; that stretch reads KDPDSSATNEEKDLNSEDQK. The span at 335 to 355 shows a compositional bias: polar residues; it reads VPTSGNTIESPLHENISNSTS. S344 bears the Phosphoserine mark. Over residues 364–383 the composition is skewed to acidic residues; it reads TDSEPEEGEITDSQTEDSYD. The 54-residue stretch at 434–487 folds into the FHA domain; sequence ATIGREKDMEHTLRIPEVGVSKFHAEIYFDHDLQSYVLVDQGSQNGTIVNGKQI. The segment covering 586–609 has biased composition (basic and acidic residues); the sequence is KYKDRAGKRREQVGSEGTFQRDDA. Disordered regions lie at residues 586 to 617 and 655 to 714; these read KYKD…HSEI and RTHA…GTLE. The 47-residue stretch at 619-665 folds into the G-patch domain; it reads DSNKGRKMLEKMGWKKGEGLGKDGGGMKTPIQLQLRRTHAGLGTGKP. At K664 the chain carries N6-acetyllysine. The segment covering 680–690 has biased composition (basic and acidic residues); the sequence is KNWDKARERFT.

In terms of assembly, interacts with the secreted angiogenic factor TNFSF12. Widely expressed. Expressed in endothelial cells, vascular smooth muscle cells and osteoblasts. Expressed in umbilical vein endothelial cells and microvascular endothelial cells.

The protein localises to the cytoplasm. The protein resides in the secreted. Its function is as follows. Promotes angiogenesis and the proliferation of endothelial cells. Able to bind to endothelial cells and promote cell proliferation, suggesting that it may act in an autocrine fashion. The protein is Angiogenic factor with G patch and FHA domains 1 (AGGF1) of Homo sapiens (Human).